The sequence spans 546 residues: Tegument protein UL21 homolog (546 aa).

It belongs to the alphaherpesvirinae HHV-1 UL21 protein family.

The protein resides in the virion tegument. It localises to the host cytoplasm. The protein localises to the host nucleus. Functionally, may facilitate the viral transport through neural circuits. This is Tegument protein UL21 homolog (MDV033) from Gallus gallus (Chicken).